The chain runs to 180 residues: MNTVLSRANSLFAFSLSVMAALTFGCFITTAFKERSVPVSIAVSRVTLRNVEDFTGPRERSDLAFVTFDITADLQSIFDWNVKQLFLYLSAEYSTKNNALNQVVLWDKIILRGDNPRLFLKDMKSKYFFFDDGNGLKGNRNVTLTLSWNVVPNAGLLPLVTGSGHMSVPFPDTYETTKSY.

Residues 1-11 (MNTVLSRANSL) lie on the Cytoplasmic side of the membrane. A helical; Signal-anchor for type II membrane protein membrane pass occupies residues 12–32 (FAFSLSVMAALTFGCFITTAF). At 33–180 (KERSVPVSIA…PDTYETTKSY (148 aa)) the chain is on the lumenal side. Asn-141 carries an N-linked (GlcNAc...) asparagine glycan.

Belongs to the SPCS3 family. Component of the signal peptidase complex paralog A (SPC-A) composed of a catalytic subunit SEC11A and three accessory subunits SPCS1, SPCS2 and SPCS3. Component of the signal peptidase complex paralog C (SPC-C) composed of a catalytic subunit SEC11C and three accessory subunits SPCS1, SPCS2 and SPCS3. The complex induces a local thinning of the ER membrane which is used to measure the length of the signal peptide (SP) h-region of protein substrates. This ensures the selectivity of the complex towards h-regions shorter than 18-20 amino acids. Expressed in hen oviduct (at protein level).

It is found in the endoplasmic reticulum membrane. Essential component of the signal peptidase complex (SPC) which catalyzes the cleavage of N-terminal signal sequences from nascent proteins as they are translocated into the lumen of the endoplasmic reticulum. Essential for the SPC catalytic activity, possibly by stabilizing and positioning the active center of the complex close to the lumenal surface. This Gallus gallus (Chicken) protein is Signal peptidase complex subunit 3.